A 161-amino-acid chain; its full sequence is Regulator of ribonuclease activity A (161 aa).

It belongs to the RraA family. In terms of assembly, homotrimer. Binds to both RNA-binding sites in the C-terminal region of Rne and to RhlB.

It localises to the cytoplasm. Functionally, globally modulates RNA abundance by binding to RNase E (Rne) and regulating its endonucleolytic activity. Can modulate Rne action in a substrate-dependent manner by altering the composition of the degradosome. Modulates RNA-binding and helicase activities of the degradosome. The sequence is that of Regulator of ribonuclease activity A from Shewanella denitrificans (strain OS217 / ATCC BAA-1090 / DSM 15013).